We begin with the raw amino-acid sequence, 167 residues long: Antibacterial peptide PMAP-37 (167 aa).

The first 29 residues, 1-29, serve as a signal peptide directing secretion; sequence METQRASLCLGRWSLWLLLLALVVPSASA. Positions 30-130 are excised as a propeptide; the sequence is QALSYREAVL…DITCNEIQSV (101 aa). Intrachain disulfides connect cysteine 85-cysteine 96 and cysteine 107-cysteine 124.

This sequence belongs to the cathelicidin family.

The protein resides in the secreted. Exerts antimicrobial activity against both Gram-positive and negative bacteria with minimal inhibitory concentrations ranging over 1-4 micro molar. Its activity appears to be mediated by its ability to damage bacterial membranes. This Sus scrofa (Pig) protein is Antibacterial peptide PMAP-37 (PMAP37).